The sequence spans 322 residues: Manganese-dependent ADP-ribose/CDP-alcohol diphosphatase (322 aa).

The Zn(2+) site is built by Asp-13, Gln-15, Asp-60, Asn-96, His-228, His-265, and His-267.

It belongs to the ADPRibase-Mn family. Monomer. Requires Mg(2+) as cofactor.

It carries out the reaction CDP-choline + H2O = phosphocholine + CMP + 2 H(+). The catalysed reaction is ADP-D-ribose + H2O = D-ribose 5-phosphate + AMP + 2 H(+). It catalyses the reaction CDP-glycerol + H2O = sn-glycerol 3-phosphate + CMP + 2 H(+). Functionally, hydrolyzes ADP-ribose, IDP-ribose, CDP-glycerol, CDP-choline and CDP-ethanolamine, but not other non-reducing ADP-sugars or CDP-glucose. The sequence is that of Manganese-dependent ADP-ribose/CDP-alcohol diphosphatase (adprm) from Danio rerio (Zebrafish).